The following is an 891-amino-acid chain: Valine--tRNA ligase (891 aa).

A 'HIGH' region motif is present at residues 43–53; the sequence is PFTSGTLHLGH. A 'KMSKS' region motif is present at residues 536–540; the sequence is KMSKS. Position 539 (K539) interacts with ATP.

This sequence belongs to the class-I aminoacyl-tRNA synthetase family. ValS type 2 subfamily.

It localises to the cytoplasm. The catalysed reaction is tRNA(Val) + L-valine + ATP = L-valyl-tRNA(Val) + AMP + diphosphate. Functionally, catalyzes the attachment of valine to tRNA(Val). As ValRS can inadvertently accommodate and process structurally similar amino acids such as threonine, to avoid such errors, it has a 'posttransfer' editing activity that hydrolyzes mischarged Thr-tRNA(Val) in a tRNA-dependent manner. The chain is Valine--tRNA ligase from Pyrococcus abyssi (strain GE5 / Orsay).